The following is a 256-amino-acid chain: Ubiquinone/menaquinone biosynthesis C-methyltransferase UbiE (256 aa).

S-adenosyl-L-methionine-binding positions include threonine 79, aspartate 100, and aspartate 128–alanine 129.

The protein belongs to the class I-like SAM-binding methyltransferase superfamily. MenG/UbiE family.

It catalyses the reaction a 2-demethylmenaquinol + S-adenosyl-L-methionine = a menaquinol + S-adenosyl-L-homocysteine + H(+). It carries out the reaction a 2-methoxy-6-(all-trans-polyprenyl)benzene-1,4-diol + S-adenosyl-L-methionine = a 5-methoxy-2-methyl-3-(all-trans-polyprenyl)benzene-1,4-diol + S-adenosyl-L-homocysteine + H(+). Its pathway is quinol/quinone metabolism; menaquinone biosynthesis; menaquinol from 1,4-dihydroxy-2-naphthoate: step 2/2. The protein operates within cofactor biosynthesis; ubiquinone biosynthesis. Functionally, methyltransferase required for the conversion of demethylmenaquinol (DMKH2) to menaquinol (MKH2) and the conversion of 2-polyprenyl-6-methoxy-1,4-benzoquinol (DDMQH2) to 2-polyprenyl-3-methyl-6-methoxy-1,4-benzoquinol (DMQH2). This is Ubiquinone/menaquinone biosynthesis C-methyltransferase UbiE from Stutzerimonas stutzeri (strain A1501) (Pseudomonas stutzeri).